The primary structure comprises 129 residues: D-ribose pyranase (129 aa).

Catalysis depends on H20, which acts as the Proton donor. Substrate is bound by residues D28, H96, and 118 to 120 (YAN).

Belongs to the RbsD / FucU family. RbsD subfamily. As to quaternary structure, homodecamer.

The protein localises to the cytoplasm. The catalysed reaction is beta-D-ribopyranose = beta-D-ribofuranose. It participates in carbohydrate metabolism; D-ribose degradation; D-ribose 5-phosphate from beta-D-ribopyranose: step 1/2. In terms of biological role, catalyzes the interconversion of beta-pyran and beta-furan forms of D-ribose. This chain is D-ribose pyranase, found in Streptomyces avermitilis (strain ATCC 31267 / DSM 46492 / JCM 5070 / NBRC 14893 / NCIMB 12804 / NRRL 8165 / MA-4680).